Consider the following 205-residue polypeptide: Ribonuclease HII (205 aa).

The RNase H type-2 domain occupies Val-16–Ile-205. A divalent metal cation is bound by residues Asp-22, Glu-23, and Asp-118.

It belongs to the RNase HII family. The cofactor is Mn(2+). Mg(2+) serves as cofactor.

The protein localises to the cytoplasm. The catalysed reaction is Endonucleolytic cleavage to 5'-phosphomonoester.. In terms of biological role, endonuclease that specifically degrades the RNA of RNA-DNA hybrids. This is Ribonuclease HII from Prochlorococcus marinus (strain MIT 9312).